The primary structure comprises 463 residues: Cytoplasmic tRNA 2-thiolation protein 2 (463 aa).

Belongs to the CTU2/NCS2 family.

Its subcellular location is the cytoplasm. Its pathway is tRNA modification; 5-methoxycarbonylmethyl-2-thiouridine-tRNA biosynthesis. In terms of biological role, plays a central role in 2-thiolation of mcm(5)S(2)U at tRNA wobble positions of tRNA(Lys), tRNA(Glu) and tRNA(Gln). May act by forming a heterodimer with NCS6 that ligates sulfur from thiocarboxylated URM1 onto the uridine of tRNAs at wobble position. Prior mcm(5) tRNA modification by the elongator complex is required for 2-thiolation. May also be involved in protein urmylation. This chain is Cytoplasmic tRNA 2-thiolation protein 2, found in Kluyveromyces lactis (strain ATCC 8585 / CBS 2359 / DSM 70799 / NBRC 1267 / NRRL Y-1140 / WM37) (Yeast).